A 914-amino-acid polypeptide reads, in one-letter code: Valine--tRNA ligase (914 aa).

Positions 45–55 (PNVTGSLHMGH) match the 'HIGH' region motif. A 'KMSKS' region motif is present at residues 538 to 542 (KMSKS). Lys-541 contacts ATP. A coiled-coil region spans residues 847–914 (LVDLDALKGR…LARKRLADLS (68 aa)).

Belongs to the class-I aminoacyl-tRNA synthetase family. ValS type 1 subfamily. In terms of assembly, monomer.

It is found in the cytoplasm. It carries out the reaction tRNA(Val) + L-valine + ATP = L-valyl-tRNA(Val) + AMP + diphosphate. Catalyzes the attachment of valine to tRNA(Val). As ValRS can inadvertently accommodate and process structurally similar amino acids such as threonine, to avoid such errors, it has a 'posttransfer' editing activity that hydrolyzes mischarged Thr-tRNA(Val) in a tRNA-dependent manner. The polypeptide is Valine--tRNA ligase (Parasynechococcus marenigrum (strain WH8102)).